The following is a 692-amino-acid chain: DNA topoisomerase 4 subunit B (692 aa).

Residues Y53, N93, D120, 162 to 168 (GLHGVGI), and K393 each bind ATP. Residues 473–587 (AELFIVEGDS…AGHLYLAVPP (115 aa)) enclose the Toprim domain. Mg(2+) contacts are provided by E479, D552, and D554.

This sequence belongs to the type II topoisomerase family. ParE type 1 subfamily. In terms of assembly, heterotetramer composed of ParC and ParE. Mg(2+) is required as a cofactor. The cofactor is Mn(2+). Requires Ca(2+) as cofactor.

It catalyses the reaction ATP-dependent breakage, passage and rejoining of double-stranded DNA.. Topoisomerase IV is essential for chromosome segregation. It relaxes supercoiled DNA. Performs the decatenation events required during the replication of a circular DNA molecule. This Bartonella bacilliformis (strain ATCC 35685 / KC583 / Herrer 020/F12,63) protein is DNA topoisomerase 4 subunit B.